Consider the following 108-residue polypeptide: MITSAAYVGAAVAEIAGCFAFWAWLRLGKSVWWLAPGMVSLALFAYLLTLVDSEAAGRAYAAYGGVYIIASLGWLWSVEGLRPDRWDLTGAAICLLGAAIILFGPRQI.

A run of 4 helical transmembrane segments spans residues alanine 5 to leucine 25, valine 31 to valine 51, alanine 61 to leucine 81, and leucine 88 to isoleucine 108.

It belongs to the UPF0060 family.

It localises to the cell inner membrane. This Nitrobacter hamburgensis (strain DSM 10229 / NCIMB 13809 / X14) protein is UPF0060 membrane protein Nham_2004.